The following is a 547-amino-acid chain: Delta-guaiene synthase 3 (547 aa).

Mg(2+) is bound by residues Asp299, Asp303, and Asp444. The short motif at 299–303 (DDTYD) is the DDXXD motif element.

The protein belongs to the terpene synthase family. The cofactor is Mg(2+).

It catalyses the reaction (2E,6E)-farnesyl diphosphate = delta-guaiene + diphosphate. The enzyme catalyses (2E,6E)-farnesyl diphosphate = alpha-guaiene + diphosphate. It participates in secondary metabolite biosynthesis; terpenoid biosynthesis. Its function is as follows. Sesquiterpene synthase involved in the biosynthesis of delta-guaiene (78.2%) and alpha-guaiene (20.9%), two structures composed of five- and seven-membered rings. Also produces 0.9% of alpha-humulene. This chain is Delta-guaiene synthase 3 (C4), found in Aquilaria crassna (Eagle wood).